The sequence spans 465 residues: ATP synthase subunit beta (465 aa).

Glycine 152–threonine 159 is an ATP binding site.

It belongs to the ATPase alpha/beta chains family. As to quaternary structure, F-type ATPases have 2 components, CF(1) - the catalytic core - and CF(0) - the membrane proton channel. CF(1) has five subunits: alpha(3), beta(3), gamma(1), delta(1), epsilon(1). CF(0) has three main subunits: a(1), b(2) and c(9-12). The alpha and beta chains form an alternating ring which encloses part of the gamma chain. CF(1) is attached to CF(0) by a central stalk formed by the gamma and epsilon chains, while a peripheral stalk is formed by the delta and b chains.

Its subcellular location is the cell inner membrane. The enzyme catalyses ATP + H2O + 4 H(+)(in) = ADP + phosphate + 5 H(+)(out). Its function is as follows. Produces ATP from ADP in the presence of a proton gradient across the membrane. The catalytic sites are hosted primarily by the beta subunits. This Campylobacter hominis (strain ATCC BAA-381 / DSM 21671 / CCUG 45161 / LMG 19568 / NCTC 13146 / CH001A) protein is ATP synthase subunit beta.